The chain runs to 355 residues: 6-aminohexanoate-oligomer endohydrolase (355 aa).

Thr267 serves as the catalytic Nucleophile.

It belongs to the peptidase S58 family. In terms of assembly, heterotetramer composed of 4 alpha/beta heterodimers. Exists at the monomer/dimer/trimer equilibrium in aqueous solution. Expressed as an inactive precursor that is cleaved autocatalytically at Asn266/Thr267 to generate an active enzyme composed of an alpha subunit and a beta subunit.

It catalyses the reaction [N-(6-aminohexanoyl)]n + H2O = [N-(6-aminohexanoyl)]n-x + [N-(6-aminohexanoyl)]x.. It functions in the pathway xenobiotic degradation; nylon-6 oligomer degradation. Involved in the degradation of nylon-6 oligomers. Degrades cyclic and linear oligomers of 6-aminohexanoate (Ahx) with a degree of polymerization greater than three by an endo-type mode. Cannot use Ahx cyclic dimer or the Ahx linear dimer. The sequence is that of 6-aminohexanoate-oligomer endohydrolase from Paenarthrobacter ureafaciens.